A 343-amino-acid polypeptide reads, in one-letter code: Small ribosomal subunit biogenesis GTPase RsgA (343 aa).

A disordered region spans residues 1–32 (MAKRRLSKRQVDRIRERQSQRLDTSVAAPDGK). Residues 9–20 (RQVDRIRERQSQ) show a composition bias toward basic and acidic residues. One can recognise a CP-type G domain in the interval 109–273 (YGKLKPVAAN…CIDSPGIREF (165 aa)). Residues 156–159 (NKLD) and 215–223 (GQSGVGKSS) each bind GTP. Zn(2+) contacts are provided by cysteine 297, cysteine 302, histidine 304, and cysteine 310.

Belongs to the TRAFAC class YlqF/YawG GTPase family. RsgA subfamily. Monomer. Associates with 30S ribosomal subunit, binds 16S rRNA. Requires Zn(2+) as cofactor.

It localises to the cytoplasm. In terms of biological role, one of several proteins that assist in the late maturation steps of the functional core of the 30S ribosomal subunit. Helps release RbfA from mature subunits. May play a role in the assembly of ribosomal proteins into the subunit. Circularly permuted GTPase that catalyzes slow GTP hydrolysis, GTPase activity is stimulated by the 30S ribosomal subunit. The protein is Small ribosomal subunit biogenesis GTPase RsgA of Saccharophagus degradans (strain 2-40 / ATCC 43961 / DSM 17024).